A 401-amino-acid polypeptide reads, in one-letter code: Tyrosine--tRNA ligase (401 aa).

Positions 42 to 51 (PTAPDLHLGH) match the 'HIGH' region motif. Positions 226–230 (KMSKS) match the 'KMSKS' region motif. Residue Lys-229 coordinates ATP. The S4 RNA-binding domain occupies 336 to 397 (IALAQLLKQI…GKRRIAKLSI (62 aa)).

It belongs to the class-I aminoacyl-tRNA synthetase family. TyrS type 2 subfamily. In terms of assembly, homodimer.

The protein resides in the cytoplasm. The enzyme catalyses tRNA(Tyr) + L-tyrosine + ATP = L-tyrosyl-tRNA(Tyr) + AMP + diphosphate + H(+). Its function is as follows. Catalyzes the attachment of tyrosine to tRNA(Tyr) in a two-step reaction: tyrosine is first activated by ATP to form Tyr-AMP and then transferred to the acceptor end of tRNA(Tyr). The sequence is that of Tyrosine--tRNA ligase from Legionella pneumophila subsp. pneumophila (strain Philadelphia 1 / ATCC 33152 / DSM 7513).